Here is a 153-residue protein sequence, read N- to C-terminus: MTSEQTFIAIKPDGVQRGLVGPIISRFENRGFKLAAMKLTSPSRSLLEQHYSDLKEKPFFPGLVTYMLSGPIVAMVWEGKDVVKTGRTILGATNPLASAPGTIRGDFAIDVGRNVCHGSDSVESAKKEIGLWFTPEEIQNYKLNAFGWIYEKE.

The ATP site is built by Lys11, Phe59, Arg87, Thr93, Arg104, and Asn114. His117 acts as the Pros-phosphohistidine intermediate in catalysis.

The protein belongs to the NDK family. It depends on Mg(2+) as a cofactor.

The catalysed reaction is a 2'-deoxyribonucleoside 5'-diphosphate + ATP = a 2'-deoxyribonucleoside 5'-triphosphate + ADP. The enzyme catalyses a ribonucleoside 5'-diphosphate + ATP = a ribonucleoside 5'-triphosphate + ADP. Major role in the synthesis of nucleoside triphosphates other than ATP. The ATP gamma phosphate is transferred to the NDP beta phosphate via a ping-pong mechanism, using a phosphorylated active-site intermediate. This is Nucleoside diphosphate kinase (swoH) from Emericella nidulans (strain FGSC A4 / ATCC 38163 / CBS 112.46 / NRRL 194 / M139) (Aspergillus nidulans).